The following is an 82-amino-acid chain: Small ribosomal subunit protein uS17 (82 aa).

Belongs to the universal ribosomal protein uS17 family. In terms of assembly, part of the 30S ribosomal subunit.

Its function is as follows. One of the primary rRNA binding proteins, it binds specifically to the 5'-end of 16S ribosomal RNA. The protein is Small ribosomal subunit protein uS17 of Shewanella amazonensis (strain ATCC BAA-1098 / SB2B).